Consider the following 342-residue polypeptide: Pyridoxal 4-dehydrogenase (342 aa).

Aspartate 56 is an active-site residue. Tyrosine 61 (proton donor) is an active-site residue. The active site involves lysine 86. An NADP(+)-binding site is contributed by 245–255; sequence GVFNSGILAAP.

This sequence belongs to the aldo/keto reductase family. In terms of assembly, homodimer.

The enzyme catalyses pyridoxal + NAD(+) = 4-pyridoxolactone + NADH + H(+). It participates in cofactor degradation; B6 vitamer degradation; 4-pyridoxate from pyridoxal: step 1/2. This chain is Pyridoxal 4-dehydrogenase (pld1), found in Microbacterium luteolum (Aureobacterium luteolum).